A 341-amino-acid polypeptide reads, in one-letter code: Glucokinase (341 aa).

18–23 (GDIGGT) contributes to the ATP binding site.

It belongs to the bacterial glucokinase family.

It is found in the cytoplasm. The enzyme catalyses D-glucose + ATP = D-glucose 6-phosphate + ADP + H(+). The sequence is that of Glucokinase from Mesorhizobium japonicum (strain LMG 29417 / CECT 9101 / MAFF 303099) (Mesorhizobium loti (strain MAFF 303099)).